The sequence spans 369 residues: Olfactory receptor 2T1 (369 aa).

Over 1–76 (MWQEYYFLNV…LFNRKETSGL (76 aa)) the chain is Extracellular. A glycan (N-linked (GlcNAc...) asparagine) is linked at asparagine 56. The chain crosses the membrane as a helical span at residues 77 to 97 (IFAIISIIFFTALMANGVMIF). Residues 98–107 (LIQTDLRLHT) are Cytoplasmic-facing. A helical transmembrane segment spans residues 108-128 (PMYFLLSHLSLIDMMYISTIV). Residues 129–148 (PKMLVNYLLDQRTISFVGCT) lie on the Extracellular side of the membrane. A disulfide bridge connects residues cysteine 147 and cysteine 239. The chain crosses the membrane as a helical span at residues 149-169 (AQHFLYLTLVGAEFFLLGLMA). The Cytoplasmic portion of the chain corresponds to 170–191 (YDRYVAICNPLRYPVLMSRRVC). The helical transmembrane segment at 192–212 (WMIIAGSWFGGSLDGFLLTPI) threads the bilayer. Residues 213–247 (TMSFPFCNSREINHFFCEAPAVLKLACADTALYET) lie on the Extracellular side of the membrane. The helical transmembrane segment at 248–268 (VMYVCCVLMLLIPFSVVLASY) threads the bilayer. Topologically, residues 269 to 286 (ARILTTVQCMSSVEGRKK) are cytoplasmic. A helical transmembrane segment spans residues 287-307 (AFATCSSHMTVVSLFYGAAMY). Topologically, residues 308–321 (TYMLPHSYHKPAQD) are extracellular. The chain crosses the membrane as a helical span at residues 322–342 (KVLSVFYTILTPMLNPLIYSL). At 343–369 (RNKDVTGALKRALGRFKGPQRVSGGVF) the chain is on the cytoplasmic side.

It belongs to the G-protein coupled receptor 1 family.

The protein localises to the cell membrane. In terms of biological role, odorant receptor. In Homo sapiens (Human), this protein is Olfactory receptor 2T1 (OR2T1).